A 240-amino-acid chain; its full sequence is uncharacterized protein (240 aa).

This is an uncharacterized protein from Methanocaldococcus jannaschii (strain ATCC 43067 / DSM 2661 / JAL-1 / JCM 10045 / NBRC 100440) (Methanococcus jannaschii).